Here is a 60-residue protein sequence, read N- to C-terminus: Homeobox protein engrailed-like B (60 aa).

The homeobox DNA-binding region spans Val1–Gln41.

This sequence belongs to the engrailed homeobox family.

The protein resides in the nucleus. In Myxine glutinosa (Atlantic hagfish), this protein is Homeobox protein engrailed-like B.